Reading from the N-terminus, the 564-residue chain is MFS-type transporter kojT (564 aa).

A glycan (N-linked (GlcNAc...) asparagine) is linked at N113. Transmembrane regions (helical) follow at residues W120–D140, S159–F179, P187–P207, F217–I237, V249–G269, W278–V298, I353–L373, G389–V409, L437–T457, I462–F482, A500–I520, and W530–Y550.

It belongs to the major facilitator superfamily.

It localises to the cell membrane. Its function is as follows. MFS-type transporter; part of the gene cluster that mediates the biosynthesis of 5-hydroxy-2-hydroxymethyl-1,4-pyrone, also know as kojic acid, a by-product in the fermentation process of malting rice that acts as a chelation agent. Involved in the seretion of kojic acid. The protein is MFS-type transporter kojT of Aspergillus flavus (strain ATCC 200026 / FGSC A1120 / IAM 13836 / NRRL 3357 / JCM 12722 / SRRC 167).